Consider the following 584-residue polypeptide: 65 kDa membrane protein (584 aa).

An N-terminal signal peptide occupies residues 1-30 (MKFKSLITTTLALGVLASTGANFNNNEASA). MAP repeat units follow at residues 45-154 (GYSK…EDKK), 156-265 (DKAN…ENKA), 266-374 (KRNY…KADR), 375-474 (YVPY…TGTK), and 475-584 (AKAD…KKNK).

It localises to the cell membrane. Binds various plasma and ECM-proteins. In Staphylococcus aureus (strain Newman), this protein is 65 kDa membrane protein.